A 515-amino-acid polypeptide reads, in one-letter code: 1-pyrroline-5-carboxylate dehydrogenase (515 aa).

Residues E286 and C320 contribute to the active site.

This sequence belongs to the aldehyde dehydrogenase family. RocA subfamily.

It carries out the reaction L-glutamate 5-semialdehyde + NAD(+) + H2O = L-glutamate + NADH + 2 H(+). It functions in the pathway amino-acid degradation; L-proline degradation into L-glutamate; L-glutamate from L-proline: step 2/2. In Bacillus cereus (strain ATCC 10987 / NRS 248), this protein is 1-pyrroline-5-carboxylate dehydrogenase.